We begin with the raw amino-acid sequence, 79 residues long: MAKFASIITLLFAALVVFAAFEAPTMVEAKLCERSSGTWSGVCGNNNACKNQCIRLEGAQHGSCNYVFPAHKCICYFPC.

An N-terminal signal peptide occupies residues 1–29 (MAKFASIITLLFAALVVFAAFEAPTMVEA). 4 disulfides stabilise this stretch: cysteine 32–cysteine 79, cysteine 43–cysteine 64, cysteine 49–cysteine 73, and cysteine 53–cysteine 75.

It belongs to the DEFL family.

The protein resides in the secreted. Functionally, possesses antifungal activity sensitive to inorganic cations. This Brassica napus (Rape) protein is Defensin-like protein 3 (AFP3).